A 92-amino-acid chain; its full sequence is Large ribosomal subunit protein eL43 (92 aa).

The C4-type zinc finger occupies 39-60 (CSFCGKDSMKRAVVGIWSCKRC).

This sequence belongs to the eukaryotic ribosomal protein eL43 family.

The protein is Large ribosomal subunit protein eL43 (RpL37A) of Drosophila melanogaster (Fruit fly).